The sequence spans 290 residues: Concanavalin-A (290 aa).

The N-terminal stretch at 1-29 is a signal peptide; the sequence is MAISKKSSLFLPIFTFITMFLMVVNKVSS. A carbohydrate-binding residues include aspartate 119 and arginine 139. Aspartate 119 contributes to the Ca(2+) binding site. A propeptide spanning residues 149–163 is cleaved from the precursor; it reads VIRNSTTIDFNAAYN. Asparagine 152 carries N-linked (GlcNAc...) asparagine glycosylation. The Mn(2+) site is built by glutamate 171 and aspartate 173. Residues aspartate 173, tyrosine 175, asparagine 177, and aspartate 182 each contribute to the Ca(2+) site. Mn(2+) is bound by residues aspartate 182 and histidine 187. A carbohydrate is bound at residue 262–263; that stretch reads LY. A propeptide spanning residues 282–290 is cleaved from the precursor; the sequence is EIPDIATVV.

The protein belongs to the leguminous lectin family. In terms of assembly, homotetramer. The mature chain consists of residues 164-281 followed by 30-148. To form a mature chain the precursor undergoes further post-translational modification after removal of the signal sequence; cleavage after Asn at positions Asn-148, Asn-163, and Asn-281 is followed by transposition and ligation (By formation of a new peptide bond) of residues 164-281 and 30-148.

In terms of biological role, glucose/D-mannose/rhamnose specific lectin. Has hemagglutinating activity towards rabbit erythrocytes. Has mitogenic activity towards murine splenocytes that is inhibited by glucose. Inhibits HIV-1 reverse transcriptase with an IC(50) of 35 uM. Has a potent antiproliferative activity against L1210 leukemia cells in vitro that is not inhibited by glucose. Inhibits translation in cell-free rabbit reticulocyte system with an IC(50) of 2.08 uM. Lacks anti-fungal activity against M.arachidicola, B.cenera and F.oxysporum. This chain is Concanavalin-A, found in Canavalia gladiata (Sword bean).